The primary structure comprises 153 residues: 6,7-dimethyl-8-ribityllumazine synthase (153 aa).

Residues phenylalanine 22, 56–58, and 80–82 contribute to the 5-amino-6-(D-ribitylamino)uracil site; these read AFE and TVI. 85–86 is a binding site for (2S)-2-hydroxy-3-oxobutyl phosphate; that stretch reads ST. The active-site Proton donor is histidine 88. A 5-amino-6-(D-ribitylamino)uracil-binding site is contributed by phenylalanine 113. Position 127 (arginine 127) interacts with (2S)-2-hydroxy-3-oxobutyl phosphate.

Belongs to the DMRL synthase family. Forms an icosahedral capsid composed of 60 subunits, arranged as a dodecamer of pentamers.

It catalyses the reaction (2S)-2-hydroxy-3-oxobutyl phosphate + 5-amino-6-(D-ribitylamino)uracil = 6,7-dimethyl-8-(1-D-ribityl)lumazine + phosphate + 2 H2O + H(+). It functions in the pathway cofactor biosynthesis; riboflavin biosynthesis; riboflavin from 2-hydroxy-3-oxobutyl phosphate and 5-amino-6-(D-ribitylamino)uracil: step 1/2. Catalyzes the formation of 6,7-dimethyl-8-ribityllumazine by condensation of 5-amino-6-(D-ribitylamino)uracil with 3,4-dihydroxy-2-butanone 4-phosphate. This is the penultimate step in the biosynthesis of riboflavin. This is 6,7-dimethyl-8-ribityllumazine synthase from Haemophilus ducreyi (strain 35000HP / ATCC 700724).